The primary structure comprises 247 residues: Acyl-coenzyme A thioesterase THEM5 (247 aa).

Asp-167 (proton donor/acceptor) is an active-site residue.

Belongs to the THEM4/THEM5 thioesterase family. Homodimer.

Its subcellular location is the mitochondrion matrix. The catalysed reaction is hexadecanoyl-CoA + H2O = hexadecanoate + CoA + H(+). It catalyses the reaction (9Z,12Z)-octadecadienoyl-CoA + H2O = (9Z,12Z)-octadecadienoate + CoA + H(+). The enzyme catalyses tetradecanoyl-CoA + H2O = tetradecanoate + CoA + H(+). It carries out the reaction (9Z)-octadecenoyl-CoA + H2O = (9Z)-octadecenoate + CoA + H(+). The catalysed reaction is (9Z)-hexadecenoyl-CoA + H2O = (9Z)-hexadecenoate + CoA + H(+). It catalyses the reaction (5Z,8Z,11Z,14Z)-eicosatetraenoyl-CoA + H2O = (5Z,8Z,11Z,14Z)-eicosatetraenoate + CoA + H(+). The enzyme catalyses octadecanoyl-CoA + H2O = octadecanoate + CoA + H(+). Has acyl-CoA thioesterase activity towards long-chain (C16 and C18) fatty acyl-CoA substrates, with a preference for linoleoyl-CoA and other unsaturated long-chain fatty acid-CoA esters. Plays an important role in mitochondrial fatty acid metabolism, and in remodeling of the mitochondrial lipid cardiolipin. Required for normal mitochondrial function. The chain is Acyl-coenzyme A thioesterase THEM5 (THEM5) from Homo sapiens (Human).